The sequence spans 518 residues: MIPDVSQALAWLEKHPQALKGIQRGLERETLRVNADGTLATTGHPEALGSALTHKWITTDFAEALLEFITPVDGDIEHMLTFMRDLHRYTARNMGDERMWPLSMPCYIAEGQDIELAQYGTSNTGRFKTLYREGLKNRYGALMQTISGVHYNFSLPMAFWQAKCGDISGTDAKEKISAGYFRVIRNYYRFGWVIPYLFGASPAIFSSFLQGKPTSLPFEKTECGMYYLPYATSLRLSDLGYTNKSQSNLGITFNDLYEYVAGLKQAIKTPSEEYAKIGIEKDGKRLQINSNVLQIENELYAPIRPKRVTRSGESPSDALLRGGIEYIEVRSLDINPFSPIGVDEQQVRFLDLFMVWCALADAPEMSSSELACTRVNWNRVILEGRKPGLTLGIGCETAQFPLPQVGKDLFRDLKRVAQTLDSINGGEAYQKVCDELVACFDNPDLTFSARILRSMIDTGIGGTGKAFAEAYRNLLREEPLEILREEDFVAEREASERRQQEMETADTEPFAVWLEKHA.

Belongs to the glutamate--cysteine ligase type 1 family. Type 1 subfamily.

It carries out the reaction L-cysteine + L-glutamate + ATP = gamma-L-glutamyl-L-cysteine + ADP + phosphate + H(+). Its pathway is sulfur metabolism; glutathione biosynthesis; glutathione from L-cysteine and L-glutamate: step 1/2. This chain is Glutamate--cysteine ligase, found in Shigella boydii serotype 18 (strain CDC 3083-94 / BS512).